The following is a 522-amino-acid chain: BTB/POZ domain-containing protein 16 (522 aa).

Positions 166–222 constitute a BTB domain; the sequence is INDPAVTRVAFALALKNLYMKEVEMTVDNVLGVLASAHILQFNRLFQKCVNMMMNRL.

This chain is BTB/POZ domain-containing protein 16 (Btbd16), found in Mus musculus (Mouse).